The sequence spans 288 residues: GTP-binding protein 8 (288 aa).

One can recognise an EngB-type G domain in the interval 109–282; that stretch reads HRPEVCFIGR…RCFIADITGN (174 aa). GTP-binding positions include 117–124, 146–150, 164–167, 226–229, and 261–263; these read GRSNVGKS, GHTKK, DMPG, TKID, and VSA. Residues serine 124 and threonine 148 each coordinate Mg(2+).

The protein belongs to the TRAFAC class TrmE-Era-EngA-EngB-Septin-like GTPase superfamily. EngB GTPase family. The cofactor is Mg(2+).

The protein is GTP-binding protein 8 (GTPBP8) of Bos taurus (Bovine).